The sequence spans 325 residues: Eukaryotic translation initiation factor 3 subunit I (325 aa).

WD repeat units follow at residues 8–47 (GHER…RLGT), 50–91 (GHTG…ALLK), 144–183 (CNDS…VLVN), and 186–225 (EHSR…HQKT). Threonine 219 carries the phosphothreonine modification. Position 264 is an N6-acetyllysine (lysine 264). A Glycyl lysine isopeptide (Lys-Gly) (interchain with G-Cter in ubiquitin) cross-link involves residue lysine 282. The WD 5 repeat unit spans residues 283 to 324 (GHFGPINSVAFHPDGKSYSSGGEDGYVRIHYFDPQYFEFEFE). Phosphotyrosine is present on tyrosine 308.

This sequence belongs to the eIF-3 subunit I family. As to quaternary structure, component of the eukaryotic translation initiation factor 3 (eIF-3) complex, which is composed of 13 subunits: EIF3A, EIF3B, EIF3C, EIF3D, EIF3E, EIF3F, EIF3G, EIF3H, EIF3I, EIF3J, EIF3K, EIF3L and EIF3M. The eIF-3 complex appears to include 3 stable modules: module A is composed of EIF3A, EIF3B, EIF3G and EIF3I; module B is composed of EIF3F, EIF3H, and EIF3M; and module C is composed of EIF3C, EIF3D, EIF3E, EIF3K and EIF3L. EIF3C of module C binds EIF3B of module A and EIF3H of module B, thereby linking the three modules. EIF3J is a labile subunit that binds to the eIF-3 complex via EIF3B. The eIF-3 complex interacts with RPS6KB1 under conditions of nutrient depletion. Mitogenic stimulation leads to binding and activation of a complex composed of MTOR and RPTOR, leading to phosphorylation and release of RPS6KB1 and binding of EIF4B to eIF-3. In terms of processing, phosphorylated by TGF-beta type II receptor.

The protein resides in the cytoplasm. Its function is as follows. Component of the eukaryotic translation initiation factor 3 (eIF-3) complex, which is required for several steps in the initiation of protein synthesis. The eIF-3 complex associates with the 40S ribosome and facilitates the recruitment of eIF-1, eIF-1A, eIF-2:GTP:methionyl-tRNAi and eIF-5 to form the 43S pre-initiation complex (43S PIC). The eIF-3 complex stimulates mRNA recruitment to the 43S PIC and scanning of the mRNA for AUG recognition. The eIF-3 complex is also required for disassembly and recycling of post-termination ribosomal complexes and subsequently prevents premature joining of the 40S and 60S ribosomal subunits prior to initiation. The eIF-3 complex specifically targets and initiates translation of a subset of mRNAs involved in cell proliferation, including cell cycling, differentiation and apoptosis, and uses different modes of RNA stem-loop binding to exert either translational activation or repression. The polypeptide is Eukaryotic translation initiation factor 3 subunit I (Bos taurus (Bovine)).